A 275-amino-acid polypeptide reads, in one-letter code: 3-methyl-2-oxobutanoate hydroxymethyltransferase (275 aa).

Residues Asp55 and Asp94 each coordinate Mg(2+). Residues 55–56 (DS), Asp94, and Lys122 contribute to the 3-methyl-2-oxobutanoate site. Mg(2+) is bound at residue Glu124. Glu191 acts as the Proton acceptor in catalysis.

Belongs to the PanB family. As to quaternary structure, homodecamer; pentamer of dimers. It depends on Mg(2+) as a cofactor.

The protein localises to the cytoplasm. The enzyme catalyses 3-methyl-2-oxobutanoate + (6R)-5,10-methylene-5,6,7,8-tetrahydrofolate + H2O = 2-dehydropantoate + (6S)-5,6,7,8-tetrahydrofolate. It participates in cofactor biosynthesis; (R)-pantothenate biosynthesis; (R)-pantoate from 3-methyl-2-oxobutanoate: step 1/2. Its function is as follows. Catalyzes the reversible reaction in which hydroxymethyl group from 5,10-methylenetetrahydrofolate is transferred onto alpha-ketoisovalerate to form ketopantoate. The protein is 3-methyl-2-oxobutanoate hydroxymethyltransferase of Marinomonas sp. (strain MWYL1).